The primary structure comprises 345 residues: Heat-inducible transcription repressor HrcA (345 aa).

Belongs to the HrcA family.

In terms of biological role, negative regulator of class I heat shock genes (grpE-dnaK-dnaJ and groELS operons). Prevents heat-shock induction of these operons. This Lachnoclostridium phytofermentans (strain ATCC 700394 / DSM 18823 / ISDg) (Clostridium phytofermentans) protein is Heat-inducible transcription repressor HrcA.